We begin with the raw amino-acid sequence, 376 residues long: Chaperone protein DnaJ (376 aa).

Residues 5–70 (DFYEVLGVGR…DKKAAYDQFG (66 aa)) form the J domain. The segment at 132-210 (GLSKELRIPT…CHGEGRVEKS (79 aa)) adopts a CR-type zinc-finger fold. Zn(2+)-binding residues include C145, C148, C162, C165, C184, C187, C198, and C201. 4 CXXCXGXG motif repeats span residues 145-152 (CEPCDGSG), 162-169 (CGTCHGQG), 184-191 (CPTCHGRG), and 198-205 (CNKCHGEG).

It belongs to the DnaJ family. In terms of assembly, homodimer. Zn(2+) serves as cofactor.

Its subcellular location is the cytoplasm. Functionally, participates actively in the response to hyperosmotic and heat shock by preventing the aggregation of stress-denatured proteins and by disaggregating proteins, also in an autonomous, DnaK-independent fashion. Unfolded proteins bind initially to DnaJ; upon interaction with the DnaJ-bound protein, DnaK hydrolyzes its bound ATP, resulting in the formation of a stable complex. GrpE releases ADP from DnaK; ATP binding to DnaK triggers the release of the substrate protein, thus completing the reaction cycle. Several rounds of ATP-dependent interactions between DnaJ, DnaK and GrpE are required for fully efficient folding. Also involved, together with DnaK and GrpE, in the DNA replication of plasmids through activation of initiation proteins. This is Chaperone protein DnaJ from Shewanella piezotolerans (strain WP3 / JCM 13877).